The primary structure comprises 103 residues: Small ribosomal subunit protein eS24 (103 aa).

This sequence belongs to the eukaryotic ribosomal protein eS24 family.

In Methanococcus maripaludis (strain C6 / ATCC BAA-1332), this protein is Small ribosomal subunit protein eS24.